Reading from the N-terminus, the 106-residue chain is Thioredoxin (106 aa).

The Thioredoxin domain maps to 1–106 (GATVKVTNAT…RLAAFLDASL (106 aa)). An intrachain disulfide couples Cys-31 to Cys-34.

Belongs to the thioredoxin family.

Functionally, participates in various redox reactions through the reversible oxidation of its active center dithiol to a disulfide and catalyzes dithiol-disulfide exchange reactions. In Kitasatospora aureofaciens (Streptomyces aureofaciens), this protein is Thioredoxin (trxA).